Consider the following 124-residue polypeptide: Small ribosomal subunit protein uS12 (124 aa).

Residue Asp90 is modified to 3-methylthioaspartic acid.

It belongs to the universal ribosomal protein uS12 family. As to quaternary structure, part of the 30S ribosomal subunit. Contacts proteins S8 and S17. May interact with IF1 in the 30S initiation complex.

Its function is as follows. With S4 and S5 plays an important role in translational accuracy. Interacts with and stabilizes bases of the 16S rRNA that are involved in tRNA selection in the A site and with the mRNA backbone. Located at the interface of the 30S and 50S subunits, it traverses the body of the 30S subunit contacting proteins on the other side and probably holding the rRNA structure together. The combined cluster of proteins S8, S12 and S17 appears to hold together the shoulder and platform of the 30S subunit. This chain is Small ribosomal subunit protein uS12, found in Wolbachia sp. subsp. Brugia malayi (strain TRS).